The chain runs to 264 residues: Thiazole synthase (264 aa).

The Schiff-base intermediate with DXP role is filled by Lys-106. Residues Gly-167, Ala-193–Gly-194, and Asn-215–Thr-216 contribute to the 1-deoxy-D-xylulose 5-phosphate site.

This sequence belongs to the ThiG family. As to quaternary structure, homotetramer. Forms heterodimers with either ThiH or ThiS.

It localises to the cytoplasm. It carries out the reaction [ThiS sulfur-carrier protein]-C-terminal-Gly-aminoethanethioate + 2-iminoacetate + 1-deoxy-D-xylulose 5-phosphate = [ThiS sulfur-carrier protein]-C-terminal Gly-Gly + 2-[(2R,5Z)-2-carboxy-4-methylthiazol-5(2H)-ylidene]ethyl phosphate + 2 H2O + H(+). It functions in the pathway cofactor biosynthesis; thiamine diphosphate biosynthesis. In terms of biological role, catalyzes the rearrangement of 1-deoxy-D-xylulose 5-phosphate (DXP) to produce the thiazole phosphate moiety of thiamine. Sulfur is provided by the thiocarboxylate moiety of the carrier protein ThiS. In vitro, sulfur can be provided by H(2)S. This chain is Thiazole synthase, found in Stenotrophomonas maltophilia (strain R551-3).